The sequence spans 67 residues: MRCVPVFIILLLLSPSAPSVDAHPKTKDDVPLASFHDDAKRTLQRLWIKALCCYGYRFCCPIFGKGK.

The N-terminal stretch at Met-1–Ala-22 is a signal peptide. A propeptide spanning residues His-23–Ile-48 is cleaved from the precursor. Phe-63 carries the post-translational modification Phenylalanine amide. Positions Lys-65–Lys-67 are excised as a propeptide.

Belongs to the conotoxin T superfamily. Contains 2 disulfide bonds that can be either 'C1-C3, C2-C4' or 'C1-C4, C2-C3', since these disulfide connectivities have been observed for conotoxins with cysteine framework V (for examples, see AC P0DQQ7 and AC P81755). Expressed by the venom duct.

It is found in the secreted. The sequence is that of Conotoxin LiC33 from Conus lividus (Livid cone).